The primary structure comprises 149 residues: Histone H2B.3, sperm (149 aa).

Positions 1 to 57 (MPRSPAKTSPRKGSPRKGSPRKGSPSRKASPKRGGKGAKRAGKGGRRRRVVKRRRRR) are disordered. Short sequence motifs (SPKK motif) lie at residues 4 to 7 (SPAK), 9 to 12 (SPRK), 14 to 17 (SPRK), 19 to 22 (SPRK), 24 to 27 (SPSR), and 30 to 33 (SPKR). Residues 9-20 (SPRKGSPRKGSP) are compositionally biased toward basic residues. 3 positions are modified to phosphoserine: Ser-19, Ser-24, and Ser-30. The span at 29 to 57 (ASPKRGGKGAKRAGKGGRRRRVVKRRRRR) shows a compositional bias: basic residues. The O-linked (GlcNAc) serine glycan is linked to Ser-136. Lys-144 participates in a covalent cross-link: Glycyl lysine isopeptide (Lys-Gly) (interchain with G-Cter in ubiquitin).

Belongs to the histone H2B family. As to quaternary structure, the nucleosome is a histone octamer containing two molecules each of H2A, H2B, H3 and H4 assembled in one H3-H4 heterotetramer and two H2A-H2B heterodimers. The octamer wraps approximately 147 bp of DNA. In terms of processing, monoubiquitination of Lys-144 gives a specific tag for epigenetic transcriptional activation and is also prerequisite for histone H3 'Lys-4' and 'Lys-79' methylation. Post-translationally, phosphorylated on SPKK motifs 4, 5 and 6; which may regulate DNA binding. Dephosphorylated during maturation of spermatids to mature sperm and rephosphorylated at fertilization. GlcNAcylation at Ser-136 promotes monoubiquitination of Lys-144. It fluctuates in response to extracellular glucose, and associates with transcribed genes.

It localises to the nucleus. Its subcellular location is the chromosome. In terms of biological role, core component of nucleosome. Nucleosomes wrap and compact DNA into chromatin, limiting DNA accessibility to the cellular machineries which require DNA as a template. Histones thereby play a central role in transcription regulation, DNA repair, DNA replication and chromosomal stability. DNA accessibility is regulated via a complex set of post-translational modifications of histones, also called histone code, and nucleosome remodeling. In Parechinus angulosus (Angulate sea urchin), this protein is Histone H2B.3, sperm.